The following is a 241-amino-acid chain: Methylosome subunit pICln (241 aa).

A disordered region spans residues 88-112; sequence EDKEAHMADQEEEESEDDDDDEEPI. Residues 97-112 show a composition bias toward acidic residues; the sequence is QEEEESEDDDDDEEPI.

This sequence belongs to the pICln (TC 1.A.47) family. Component of the methylosome, a 20S complex containing at least clns1a/picln, prmt5/skb1 and wdr77/mep50; may mediate snrpd1 and snrpd3 methylation. Forms a 6S pICln-Sm complex composed of clns1a/picln, snrpd1, snrpd2, snrpe, snrpf and snrpg; ring-like structure where clns1a/pICln mimics additional Sm proteins and which is unable to assemble into the core snRNP.

It is found in the cytoplasm. Its subcellular location is the cytosol. The protein localises to the nucleus. The protein resides in the cytoskeleton. Functionally, involved in both the assembly of spliceosomal snRNPs and the methylation of Sm proteins. Chaperone that regulates the assembly of spliceosomal U1, U2, U4 and U5 small nuclear ribonucleoproteins (snRNPs), the building blocks of the spliceosome, and thereby plays an important role in the splicing of cellular pre-mRNAs. Most spliceosomal snRNPs contain a common set of Sm proteins SNRPB, SNRPD1, SNRPD2, SNRPD3, SNRPE, SNRPF and SNRPG that assemble in a heptameric protein ring on the Sm site of the small nuclear RNA to form the core snRNP (Sm core). In the cytosol, the Sm proteins SNRPD1, SNRPD2, SNRPE, SNRPF and SNRPG are trapped in an inactive 6S pICln-Sm complex by the chaperone CLNS1A that controls the assembly of the core snRNP. Dissociation by the SMN complex of CLNS1A from the trapped Sm proteins and their transfer to an SMN-Sm complex triggers the assembly of core snRNPs and their transport to the nucleus. The chain is Methylosome subunit pICln (clns1a) from Xenopus laevis (African clawed frog).